Here is a 203-residue protein sequence, read N- to C-terminus: Probable cytochrome c oxidase subunit 3 (203 aa).

Helical transmembrane passes span 30 to 50 (IVWLSSELMFFAGLFAMYFTA), 70 to 90 (AVPVTLVLIASSFTCQMGVFA), 102 to 122 (WYVITFLMGLFFVLGQGYEYY), 142 to 162 (LATGFHDLHVTGGLVAFIFLL), and 179 to 199 (IVVSYYWHFVDIVWIALFTVI).

The protein belongs to the cytochrome c oxidase subunit 3 family.

The protein resides in the cell membrane. It carries out the reaction 4 Fe(II)-[cytochrome c] + O2 + 8 H(+)(in) = 4 Fe(III)-[cytochrome c] + 2 H2O + 4 H(+)(out). The protein is Probable cytochrome c oxidase subunit 3 (ctaE) of Mycolicibacterium paratuberculosis (strain ATCC BAA-968 / K-10) (Mycobacterium paratuberculosis).